The sequence spans 920 residues: Protein translocase subunit SecA 2 (920 aa).

ATP is bound by residues Gln91, 109 to 113 (GEGKT), and Asp527. Over residues 859–870 (GEGSALDRRPTD) the composition is skewed to basic and acidic residues. The segment at 859–920 (GEGSALDRRP…KSRNRRRRKR (62 aa)) is disordered. The span at 906–920 (PHRPGKSRNRRRRKR) shows a compositional bias: basic residues.

Belongs to the SecA family. As to quaternary structure, monomer and homodimer. Part of the essential Sec protein translocation apparatus which comprises SecA, SecYEG and auxiliary proteins SecDF. Other proteins may also be involved.

The protein resides in the cell membrane. It is found in the cytoplasm. It catalyses the reaction ATP + H2O + cellular proteinSide 1 = ADP + phosphate + cellular proteinSide 2.. Its function is as follows. Part of the Sec protein translocase complex. Interacts with the SecYEG preprotein conducting channel. Has a central role in coupling the hydrolysis of ATP to the transfer of proteins into and across the cell membrane, serving as an ATP-driven molecular motor driving the stepwise translocation of polypeptide chains across the membrane. The sequence is that of Protein translocase subunit SecA 2 from Streptomyces avermitilis (strain ATCC 31267 / DSM 46492 / JCM 5070 / NBRC 14893 / NCIMB 12804 / NRRL 8165 / MA-4680).